Consider the following 892-residue polypeptide: Translation initiation factor IF-2 (892 aa).

Positions 88–306 (KKRTFVKRDP…LQQGFQKPAQ (219 aa)) are disordered. Composition is skewed to basic and acidic residues over residues 93 to 159 (VKRD…KDKV) and 166 to 216 (DMIK…EENK). The segment covering 254–269 (GRGRNAKAARPAKKGK) has biased composition (basic residues). Basic and acidic residues predominate over residues 270 to 282 (HAESKADREEARA). Residues 391-560 (PRAPVVTIMG…LLQAEVLELK (170 aa)) form the tr-type G domain. The interval 400 to 407 (GHVDHGKT) is G1. 400–407 (GHVDHGKT) contacts GTP. A G2 region spans residues 425–429 (GITQH). The tract at residues 446–449 (DTPG) is G3. GTP contacts are provided by residues 446–450 (DTPGH) and 500–503 (NKID). Positions 500 to 503 (NKID) are G4. The tract at residues 536–538 (SAK) is G5.

Belongs to the TRAFAC class translation factor GTPase superfamily. Classic translation factor GTPase family. IF-2 subfamily.

It localises to the cytoplasm. One of the essential components for the initiation of protein synthesis. Protects formylmethionyl-tRNA from spontaneous hydrolysis and promotes its binding to the 30S ribosomal subunits. Also involved in the hydrolysis of GTP during the formation of the 70S ribosomal complex. This Salmonella schwarzengrund (strain CVM19633) protein is Translation initiation factor IF-2.